A 763-amino-acid chain; its full sequence is Phosphoglycerol transferase I (763 aa).

4 consecutive transmembrane segments (helical) span residues 1 to 21 (MSELLSIALFLASVLIYAWKA), 26 to 46 (WWFAAILAVLGLFVVLNITLY), 77 to 97 (ILPGAGIVLALAAVFSALGWV), and 108 to 128 (FGYSLLALLLALGSVDASPAF).

It belongs to the OpgB family.

The protein resides in the cell inner membrane. The catalysed reaction is a phosphatidylglycerol + a membrane-derived-oligosaccharide D-glucose = a 1,2-diacyl-sn-glycerol + a membrane-derived-oligosaccharide 6-(glycerophospho)-D-glucose.. The protein operates within glycan metabolism; osmoregulated periplasmic glucan (OPG) biosynthesis. In terms of biological role, transfers a phosphoglycerol residue from phosphatidylglycerol to the membrane-bound nascent glucan backbones. The sequence is that of Phosphoglycerol transferase I from Citrobacter koseri (strain ATCC BAA-895 / CDC 4225-83 / SGSC4696).